Consider the following 247-residue polypeptide: tRNA (guanine-N(1)-)-methyltransferase (247 aa).

Residues glycine 112 and 132-137 each bind S-adenosyl-L-methionine; that span reads IGDFVL.

It belongs to the RNA methyltransferase TrmD family. Homodimer.

The protein localises to the cytoplasm. It catalyses the reaction guanosine(37) in tRNA + S-adenosyl-L-methionine = N(1)-methylguanosine(37) in tRNA + S-adenosyl-L-homocysteine + H(+). Specifically methylates guanosine-37 in various tRNAs. In Geotalea uraniireducens (strain Rf4) (Geobacter uraniireducens), this protein is tRNA (guanine-N(1)-)-methyltransferase.